The sequence spans 416 residues: MKFIIKSISKNSGRLGQLRIKDSKELQTPLLLQTTKGGSIPYLSADVFGMVTQEQQVLQLTLCTMDQMAESLAQWNRSLGAYVGYPEYNTLLLLRDPCEATPTGGNDRDVVPLFTRRGKESLTAERYLQLVSSFAPDVYQGLCDADTNPESTKKRVQKSVDRTERFMEHCYKQHRELDRLKDSTLLAPIVGGYNTYARTQSIKHAREQPKGSYGGYIFEGFHTNGLPATRLSPSQLLPIVEHCVQQIEEELPRLMPGPLTPVLMLELIRLGIDIFDTSYAYCAAVNYKALTFSYTIDKEEHSAFLDVTDEAIREEFKPMLEGCKCLACQKHTRAYVHHLYKTNELLGPILLMIHNLHHYMGFFDVIRQSIAMDQLSLLLDYVRRQNMPNDVNYCIEPNTKVVGKAAMGKGFITAAN.

Zn(2+) contacts are provided by Cys323, Cys325, Cys328, and His354.

This sequence belongs to the queuine tRNA-ribosyltransferase family. QTRT2 subfamily. Heterodimer of a catalytic subunit and an accessory subunit. Zn(2+) serves as cofactor.

The protein localises to the cytoplasm. In terms of biological role, non-catalytic subunit of the queuine tRNA-ribosyltransferase (TGT) that catalyzes the base-exchange of a guanine (G) residue with queuine (Q) at position 34 (anticodon wobble position) in tRNAs with GU(N) anticodons (tRNA-Asp, -Asn, -His and -Tyr), resulting in the hypermodified nucleoside queuosine (7-(((4,5-cis-dihydroxy-2-cyclopenten-1-yl)amino)methyl)-7-deazaguanosine). The polypeptide is Queuine tRNA-ribosyltransferase accessory subunit 2 (Drosophila mojavensis (Fruit fly)).